The following is a 162-amino-acid chain: Protein-export protein SecB (162 aa).

This sequence belongs to the SecB family. As to quaternary structure, homotetramer, a dimer of dimers. One homotetramer interacts with 1 SecA dimer.

It is found in the cytoplasm. In terms of biological role, one of the proteins required for the normal export of preproteins out of the cell cytoplasm. It is a molecular chaperone that binds to a subset of precursor proteins, maintaining them in a translocation-competent state. It also specifically binds to its receptor SecA. The sequence is that of Protein-export protein SecB from Pseudoalteromonas translucida (strain TAC 125).